The primary structure comprises 167 residues: Telethonin (167 aa).

The residue at position 39 (S39) is a Phosphoserine. Residues 142–167 (PVVPVSKPGPLRRTLSRSMSQEAQRG) are disordered. Polar residues predominate over residues 157 to 167 (SRSMSQEAQRG).

As to quaternary structure, interacts with MYOZ1, MYOZ2 and MYOZ3. Interacts with CSRP3. Interacts directly with the N-terminal Ig-like domains of 2 titin (TTN) molecules. Interacts with ANKRD2; the interaction is direct.

It is found in the cytoplasm. It localises to the myofibril. The protein resides in the sarcomere. Muscle assembly regulating factor. Mediates the antiparallel assembly of titin (TTN) molecules at the sarcomeric Z-disk. In Mus musculus (Mouse), this protein is Telethonin (Tcap).